The chain runs to 192 residues: uncharacterized protein (192 aa).

Positions 72 to 192 (GATVLLIVPP…SLVISEFSLV (121 aa)) constitute a B12-binding domain.

This is an uncharacterized protein from Rhodobacter capsulatus (Rhodopseudomonas capsulata).